A 190-amino-acid polypeptide reads, in one-letter code: Ribosome hibernation promotion factor (190 aa).

Belongs to the HPF/YfiA ribosome-associated protein family. Long HPF subfamily. Interacts with 100S ribosomes.

It localises to the cytoplasm. Its function is as follows. Required for dimerization of active 70S ribosomes into 100S ribosomes in stationary phase; 100S ribosomes are translationally inactive and sometimes present during exponential growth. The protein is Ribosome hibernation promotion factor of Staphylococcus aureus (strain COL).